The chain runs to 357 residues: Geranylgeranyl pyrophosphate synthase, chloroplastic (357 aa).

Residues 1-40 constitute a chloroplast transit peptide; the sequence is MRSNLCHPLKNQLPISFFLSGTIRKPIFSCSRLSISAIIT. Isopentenyl diphosphate-binding residues include lysine 106, arginine 109, and histidine 138. The Mg(2+) site is built by aspartate 145 and aspartate 151. Position 156 (arginine 156) interacts with dimethylallyl diphosphate. Position 157 (arginine 157) interacts with isopentenyl diphosphate. Positions 242, 243, 280, 297, and 307 each coordinate dimethylallyl diphosphate.

This sequence belongs to the FPP/GGPP synthase family. It depends on Mg(2+) as a cofactor.

The protein localises to the plastid. Its subcellular location is the chloroplast. The enzyme catalyses isopentenyl diphosphate + dimethylallyl diphosphate = (2E)-geranyl diphosphate + diphosphate. The catalysed reaction is isopentenyl diphosphate + (2E)-geranyl diphosphate = (2E,6E)-farnesyl diphosphate + diphosphate. It carries out the reaction isopentenyl diphosphate + (2E,6E)-farnesyl diphosphate = (2E,6E,10E)-geranylgeranyl diphosphate + diphosphate. The protein operates within isoprenoid biosynthesis; farnesyl diphosphate biosynthesis; farnesyl diphosphate from geranyl diphosphate and isopentenyl diphosphate: step 1/1. It functions in the pathway isoprenoid biosynthesis; geranyl diphosphate biosynthesis; geranyl diphosphate from dimethylallyl diphosphate and isopentenyl diphosphate: step 1/1. It participates in isoprenoid biosynthesis; geranylgeranyl diphosphate biosynthesis; geranylgeranyl diphosphate from farnesyl diphosphate and isopentenyl diphosphate: step 1/1. In terms of biological role, catalyzes the trans-addition of the three molecules of IPP onto DMAPP to form geranylgeranyl pyrophosphate. The polypeptide is Geranylgeranyl pyrophosphate synthase, chloroplastic (GGPS1) (Catharanthus roseus (Madagascar periwinkle)).